The sequence spans 243 residues: MTTNPKPAYQRILLKLSGEALQGEEGFGIDPAVLDRMAQEVKELVELGVQVGVVIGGGNLFRGAGLAEAGMNRVVGDHMGMLATVMNGLAMRDALHRAYVNARVMSAIPLKGVCDDYNWADAIRELRQGRVVIFSAGTGNPFFTTDSAACLRGIEIEADVVLKATKVDGVFTADPVANPDAELYDKLSYTEVLDKELKVMDLAAFTLARDHKMPIRVFNMNKPGALRRVVMGEAEGTLINADA.

15–18 provides a ligand contact to ATP; it reads KLSG. The segment at 23–28 is involved in allosteric activation by GTP; it reads GEEGFG. Gly-57 is a binding site for UMP. Residues Gly-58 and Arg-62 each coordinate ATP. UMP-binding positions include Asp-77 and 138–145; that span reads TGNPFFTT. ATP contacts are provided by Thr-165, Phe-171, and Asp-174.

This sequence belongs to the UMP kinase family. As to quaternary structure, homohexamer.

It is found in the cytoplasm. The enzyme catalyses UMP + ATP = UDP + ADP. It participates in pyrimidine metabolism; CTP biosynthesis via de novo pathway; UDP from UMP (UMPK route): step 1/1. Its activity is regulated as follows. Allosterically activated by GTP. Inhibited by UTP. Functionally, catalyzes the reversible phosphorylation of UMP to UDP. The protein is Uridylate kinase of Vibrio campbellii (strain ATCC BAA-1116).